The chain runs to 158 residues: Transcription elongation factor GreA (158 aa).

It belongs to the GreA/GreB family.

Necessary for efficient RNA polymerase transcription elongation past template-encoded arresting sites. The arresting sites in DNA have the property of trapping a certain fraction of elongating RNA polymerases that pass through, resulting in locked ternary complexes. Cleavage of the nascent transcript by cleavage factors such as GreA or GreB allows the resumption of elongation from the new 3'terminus. GreA releases sequences of 2 to 3 nucleotides. The sequence is that of Transcription elongation factor GreA from Methylobacterium sp. (strain 4-46).